The following is a 166-amino-acid chain: MFPMVTEFMNYGQQTVRATRYIGQGFMITLSHANRLPVTIQYPYEKLITSERFRGRIHFEFDKCIACEVCVRVCPIDLPVVDWKLETDIRKKRLLNYSIDFGICIFCGNCVEYCPTNCLSMTEEYELSTYDRHELNYNQIALGRLPMSIIDDYTIRTILNLPEIKT.

4Fe-4S ferredoxin-type domains lie at glycine 55–lysine 84 and leucine 95–glutamate 124. The [4Fe-4S] cluster site is built by cysteine 64, cysteine 67, cysteine 70, cysteine 74, cysteine 104, cysteine 107, cysteine 110, and cysteine 114.

It belongs to the complex I 23 kDa subunit family. As to quaternary structure, NDH is composed of at least 16 different subunits, 5 of which are encoded in the nucleus. [4Fe-4S] cluster is required as a cofactor.

It is found in the plastid. The protein localises to the chloroplast thylakoid membrane. The enzyme catalyses a plastoquinone + NADH + (n+1) H(+)(in) = a plastoquinol + NAD(+) + n H(+)(out). The catalysed reaction is a plastoquinone + NADPH + (n+1) H(+)(in) = a plastoquinol + NADP(+) + n H(+)(out). Functionally, NDH shuttles electrons from NAD(P)H:plastoquinone, via FMN and iron-sulfur (Fe-S) centers, to quinones in the photosynthetic chain and possibly in a chloroplast respiratory chain. The immediate electron acceptor for the enzyme in this species is believed to be plastoquinone. Couples the redox reaction to proton translocation, and thus conserves the redox energy in a proton gradient. The protein is NAD(P)H-quinone oxidoreductase subunit I, chloroplastic of Aphanactis jamesoniana.